We begin with the raw amino-acid sequence, 410 residues long: Putative nickel insertion protein (410 aa).

This sequence belongs to the LarC family.

The chain is Putative nickel insertion protein from Cyanothece sp. (strain PCC 7425 / ATCC 29141).